The primary structure comprises 162 residues: Dihydrofolate reductase (162 aa).

The region spanning lysine 3 to glycine 161 is the DHFR domain. Residue isoleucine 7–alanine 9 coordinates substrate. NADP(+) contacts are provided by residues alanine 8–alanine 9 and isoleucine 16–alanine 21. Residue aspartate 29 coordinates substrate. Glycine 45–threonine 48 lines the NADP(+) pocket. Arginine 60 contacts substrate. NADP(+) is bound by residues isoleucine 65–glutamine 68 and methionine 98–isoleucine 103. Threonine 117 contributes to the substrate binding site.

The protein belongs to the dihydrofolate reductase family.

It carries out the reaction (6S)-5,6,7,8-tetrahydrofolate + NADP(+) = 7,8-dihydrofolate + NADPH + H(+). The protein operates within cofactor biosynthesis; tetrahydrofolate biosynthesis; 5,6,7,8-tetrahydrofolate from 7,8-dihydrofolate: step 1/1. Functionally, key enzyme in folate metabolism. Catalyzes an essential reaction for de novo glycine and purine synthesis, and for DNA precursor synthesis. The chain is Dihydrofolate reductase (folA) from Neisseria gonorrhoeae.